A 377-amino-acid polypeptide reads, in one-letter code: T-protein (377 aa).

The Chorismate mutase domain maps to 1–92 (MSFMEALKDL…ESYANENQFG (92 aa)). In terms of domain architecture, Prephenate/arogenate dehydrogenase spans 101–364 (HKIVIVGGYG…DYSEQFLKES (264 aa)).

In the C-terminal section; belongs to the prephenate/arogenate dehydrogenase family.

The protein localises to the cytoplasm. It catalyses the reaction chorismate = prephenate. The catalysed reaction is prephenate + NAD(+) = 3-(4-hydroxyphenyl)pyruvate + CO2 + NADH. It functions in the pathway amino-acid biosynthesis; L-tyrosine biosynthesis; (4-hydroxyphenyl)pyruvate from prephenate (NAD(+) route): step 1/1. It participates in metabolic intermediate biosynthesis; prephenate biosynthesis; prephenate from chorismate: step 1/1. In Haemophilus influenzae (strain ATCC 51907 / DSM 11121 / KW20 / Rd), this protein is T-protein (tyrA).